The sequence spans 1828 residues: MGAGEERPEALGFNPQKEIVYNLLLPYAHRLDRESNELLAQIKGSLGRAVRLRELWPGVLFWTRKLTTYIRLYGRKFSKEDHVLFVKLLYELVTIPKLEISMMQGFARLLISLLKKKELLSREDLQLPWRPLYEMLERILYSKTEHLGLNWFPNSVEGVLKTLVKACRPYFPDDATAEMLQEWLPLMCPFDVTMQKAISYLELFLPTSLPPDLHCKGFRLWFDEFLTLWVSVQNLPQWEGHLVNLFARLANDNIGYIDWDPYVPKIFTRILRSLNLPVGSNQVLVPRQLANAYDIGHAVIWITALMGGPSKTVQKHLTGLFNSITSFYHPSNNGRWLTKLMKLLQRLPCCIIRRLHRERYKKPSWLTPVPESHRLTDQDVTDFVESIMQPVLLAMFSKTGSLEAAQALQNLALMRPELVIPPVLEKTYPALETLTEPHQLTATLSCVIGVARSLVSGGRWFPEGPTHMLPLLMRALPGVDPNDFSKCMITFQFIATFSTLVPLVDCSSLLQERNDLSEVERELCSATAEFEDFVLQFMDRCFALIESSALEQTREETETEKMTHLESLVELGLSSTFSTILTQCSKEIFKVALEKVFNFAVSNIFETRVSGRMVADLCRAAVKCCPVESLKLFLPHCCNVISHLTINDDVMNDEELDKELLWKLQLLSEITRVDGEKLLPYKEQLVQILHRTLHFTCKQGYTLSCNLLHHLLRSSTLIYPTEYCSVPGGFDKPLSDYFPIKDWGKPGDLWNLNIKWHVPSAEEMDFAYYLLDTFLRPELQKLDLYSSGELEMSRDEVQQCLAIVHNCLTGSGNLLPPLHGERVTHLVTSMVSLNETKLFTGIDHDHSRENYRELISKTLRKLLHYILDHSEDDTKSLFLIIKIISDLLQFQGSHKHEFDSRWKSFTLVKKSMENRLHGKKRHIRALLIDRVMLQHELRTLTVEGCEYKKVHQDMLRDLLRLSTSSYGQVRNKAQQAFFTALGTYNFCCRDLIPLVLEFLRPERQDVTQQQFKGALYCLLGNHGGVCLANLHDWECIVQTWPAMISSGLSKAMSLEKPSIVRLFDDLAEKIHRQYETIGLDFSVPEKCIEIAILLQHAASTSSQLPHPEELALAIKRQGEKNVEAVQNYERLVNTLLDCVTQRNLPWKFEHIGIGFLSLLLRDDYVLPVRAIRYLVQCLNHDALIVRKMAISTVAGILKQLKRTHVKETICPYKISGCPKPESKLVGDRPDNQWLLYDSSNLPNTKEAWESCCFVEKTHWGYSSWPQNMLVYAPADQQPKVGRSREEMSEAEQIIYDHFTDEKFVDQLIKFLSLEDRKGKDKFNPRRFCLFKGLFRNYDDAFLPIIKPHLERLVADSHESTQRCAAEIVAGLIRGSKHWTFEKVENLWNFLCELLRTALSNITVETYSDWGTCIATSCESRDPRKLHWLFELLLESPVSGEGGSFVDACRLYVLQGGLAQQEWRVPELLHRLLMCLEPKLTQVYKNVRERIGSVLTYIFMIDVSLPNTAPTKSPHISDFTGRILGKLKPLMDADEEIQNHVMEENGVGEQDERTQAIKLMKTILKWIMASAGRSFCTGVTEQMQLLPLLFKIAPVENDTNYDELKRDAKTCLSLMSQGLLLPVQVPLVLDVLRQTARSSSWHARYTVLTYIQTMVFYNLFIFIHNEESVQGVRWLILQLMEDEQLEVREMAATTLSGLLQCNFLTMDAAMQAHFEALCKTRLPKKRKRESGMVGDTIPSGDLVKRHAGVLGLSACILSSPYDVPTWMPQLLMDLSVHLNDPQPIEMTVKKTLSNFRRTHHDNWQEHKQQFTDDQLIVLTDLLVSPCYYA.

6 HEAT repeats span residues 462-506 (PEGP…LVDC), 985-1024 (NFCC…NHGG), 1164-1202 (YVLP…QLKR), 1339-1377 (DAFL…GSKH), 1621-1659 (PVQV…YNLF), and 1665-1703 (EESV…CNFL). The tract at residues 1635-1723 (ARSSSWHARY…EALCKTRLPK (89 aa)) is bromodomain-like (BRDL).

This sequence belongs to the BLM10 family. As to quaternary structure, homodimer. Interacts with the 20S and 26S proteasomes.

It localises to the cytoplasm. Its subcellular location is the cytosol. The protein localises to the nucleus. It is found in the nucleus speckle. In terms of biological role, associated component of the proteasome that specifically recognizes acetylated histones and promotes ATP- and ubiquitin-independent degradation of core histones during DNA damage response. Recognizes and binds acetylated histones via its bromodomain-like (BRDL) region and activates the proteasome by opening the gated channel for substrate entry. Binds to the core proteasome via its C-terminus, which occupies the same binding sites as the proteasomal ATPases, opening the closed structure of the proteasome via an active gating mechanism. involved in DNA damage response in somatic cells: binds to acetylated histones and promotes degradation of histones. The protein is Proteasome activator complex subunit 4 (psme4) of Xenopus laevis (African clawed frog).